The sequence spans 240 residues: MSSVNKNELEKFEKISHSWWNKDGEFGILHRINPIRLNYIIEKIKSHYNDISDLEILDVGCGGGLIATNLTMQGFNVTAIDALQSNIDTALAYATENNIKVNYLKSTIEELENDKQYDVVICLEVIEHVENVQEFMLNLVKRIKPKGIAIISTINRTKKAYLLGIIAAEYILGWVPKNTHDYSKFLKPSEIYEMLENTNIEIEELKGLVYNMAEDKWVLSDDDIDVNYFVYLKKNVLGVI.

Residues arginine 36, glycine 60, aspartate 81, and leucine 123 each coordinate S-adenosyl-L-methionine.

It belongs to the methyltransferase superfamily. UbiG/COQ3 family.

It carries out the reaction a 3-demethylubiquinol + S-adenosyl-L-methionine = a ubiquinol + S-adenosyl-L-homocysteine + H(+). It catalyses the reaction a 3-(all-trans-polyprenyl)benzene-1,2-diol + S-adenosyl-L-methionine = a 2-methoxy-6-(all-trans-polyprenyl)phenol + S-adenosyl-L-homocysteine + H(+). Its pathway is cofactor biosynthesis; ubiquinone biosynthesis. Functionally, O-methyltransferase that catalyzes the 2 O-methylation steps in the ubiquinone biosynthetic pathway. The protein is Ubiquinone biosynthesis O-methyltransferase of Rickettsia bellii (strain OSU 85-389).